We begin with the raw amino-acid sequence, 672 residues long: tRNA 5-methylaminomethyl-2-thiouridine biosynthesis bifunctional protein MnmC (672 aa).

Residues 1-243 (MTSITHAELG…KREMIAGCME (243 aa)) form a tRNA (mnm(5)s(2)U34)-methyltransferase region. An FAD-dependent cmnm(5)s(2)U34 oxidoreductase region spans residues 269–672 (IGGGIASAAL…LRKGKAITEL (404 aa)).

In the N-terminal section; belongs to the methyltransferase superfamily. tRNA (mnm(5)s(2)U34)-methyltransferase family. It in the C-terminal section; belongs to the DAO family. FAD serves as cofactor.

It is found in the cytoplasm. It catalyses the reaction 5-aminomethyl-2-thiouridine(34) in tRNA + S-adenosyl-L-methionine = 5-methylaminomethyl-2-thiouridine(34) in tRNA + S-adenosyl-L-homocysteine + H(+). Its function is as follows. Catalyzes the last two steps in the biosynthesis of 5-methylaminomethyl-2-thiouridine (mnm(5)s(2)U) at the wobble position (U34) in tRNA. Catalyzes the FAD-dependent demodification of cmnm(5)s(2)U34 to nm(5)s(2)U34, followed by the transfer of a methyl group from S-adenosyl-L-methionine to nm(5)s(2)U34, to form mnm(5)s(2)U34. This is tRNA 5-methylaminomethyl-2-thiouridine biosynthesis bifunctional protein MnmC from Vibrio vulnificus (strain YJ016).